A 101-amino-acid polypeptide reads, in one-letter code: Small ribosomal subunit protein uS14 (101 aa).

Residues 32 to 62 form a disordered region; sequence GDAKRSDAEREAARLGLQKLPRNANPTRQRN. Over residues 33-44 the composition is skewed to basic and acidic residues; sequence DAKRSDAEREAA.

This sequence belongs to the universal ribosomal protein uS14 family. Part of the 30S ribosomal subunit. Contacts proteins S3 and S10.

Its function is as follows. Binds 16S rRNA, required for the assembly of 30S particles and may also be responsible for determining the conformation of the 16S rRNA at the A site. The polypeptide is Small ribosomal subunit protein uS14 (Verminephrobacter eiseniae (strain EF01-2)).